Here is a 1544-residue protein sequence, read N- to C-terminus: Lysophospholipase NTE1 (1544 aa).

Topologically, residues 1 to 37 (MSTIEIVSTVAEYTEIHSPVSSKFLLPSARDSSSSIS) are cytoplasmic. Residues 38 to 58 (LFSAIFWFWSWLFFKIMNIFL) traverse the membrane as a helical segment. The Lumenal portion of the chain corresponds to 59–76 (YYIPNIIVNLFSVNFQIT). A helical membrane pass occupies residues 77-97 (LSLSSIVITLTGIISFCFLIV). The Cytoplasmic segment spans residues 98-1544 (RYKYLTRYSK…RKSLYRRSSI (1447 aa)). Disordered stretches follow at residues 265 to 312 (RLFS…RNYP) and 424 to 552 (ESPS…EETE). The segment covering 275 to 310 (NPASNPLSPDNTGSKSFDPLSSGNFNDTSLSSSDRN) has biased composition (polar residues). A compositionally biased stretch (low complexity) spans 425 to 447 (SPSVSINKTSSSSSSLPKKSTTS). Composition is skewed to polar residues over residues 448-458 (LRPLNRNQSSR) and 517-536 (QISSNGGPTLKGHSSSTTKF). Residues 537–546 (ENIRDRTFSD) are compositionally biased toward basic and acidic residues. A nucleoside 3',5'-cyclic phosphate is bound by residues 681-811 (SFES…LKSL) and 807-960 (KLKS…VANK). The PNPLA domain maps to 1237 to 1401 (LVLGGGGSRG…LDNLPVMEMK (165 aa)). A GXGXXG motif is present at residues 1241–1246 (GGGSRG). Residues 1268–1272 (GTSIG) carry the GXSXG motif. Ser-1270 functions as the Nucleophile in the catalytic mechanism. Asp-1388 (proton acceptor) is an active-site residue. The DGA/G motif lies at 1388 to 1390 (DGG).

It belongs to the NTE family.

The protein resides in the endoplasmic reticulum membrane. The catalysed reaction is a 1-acyl-sn-glycero-3-phosphocholine + H2O = sn-glycerol 3-phosphocholine + a fatty acid + H(+). With respect to regulation, inhibited by organophosphorus esters. Intracellular phospholipase B that catalyzes the double deacylation of phosphatidylcholine (PC) to glycerophosphocholine (GroPCho). Plays an important role in membrane lipid homeostasis. Responsible for the rapid PC turnover in response to inositol, elevated temperatures, or when choline is present in the growth medium. This is Lysophospholipase NTE1 (NTE1) from Debaryomyces hansenii (strain ATCC 36239 / CBS 767 / BCRC 21394 / JCM 1990 / NBRC 0083 / IGC 2968) (Yeast).